A 137-amino-acid chain; its full sequence is Crustacean hyperglycemic hormones (137 aa).

Residues 1–28 form the signal peptide; it reads MVSFRTMWSLVVVVVVVAASLGSSGVHG. Pyrrolidone carboxylic acid is present on Q64. Position 66 is a D-phenylalanine; in form CHH-II (F66). 3 disulfides stabilise this stretch: C70–C106, C86–C102, and C89–C115. V135 carries the valine amide modification.

The protein belongs to the arthropod CHH/MIH/GIH/VIH hormone family. In terms of tissue distribution, produced by the medulla terminalis X-organ in the eyestalks and transported to the sinus gland where they are stored and released.

It localises to the secreted. Its function is as follows. Hormone found in the sinus gland of isopods and decapods which controls the blood sugar level. Has a secretagogue action over the amylase released from the midgut gland. May act as a stress hormone and may be involved in the control of molting and reproduction. This Procambarus clarkii (Red swamp crayfish) protein is Crustacean hyperglycemic hormones.